A 263-amino-acid polypeptide reads, in one-letter code: Endonuclease 8 (263 aa).

The active-site Schiff-base intermediate with DNA is P2. E3 serves as the catalytic Proton donor. K53 functions as the Proton donor; for beta-elimination activity in the catalytic mechanism. DNA contacts are provided by Q70, R125, and N169. The FPG-type zinc-finger motif lies at 229-263; the sequence is KVFHRDGEACERCGGIIEKTTLSSRPFYWCPHCQK. The active-site Proton donor; for delta-elimination activity is R253.

Belongs to the FPG family. Zn(2+) is required as a cofactor.

It catalyses the reaction 2'-deoxyribonucleotide-(2'-deoxyribose 5'-phosphate)-2'-deoxyribonucleotide-DNA = a 3'-end 2'-deoxyribonucleotide-(2,3-dehydro-2,3-deoxyribose 5'-phosphate)-DNA + a 5'-end 5'-phospho-2'-deoxyribonucleoside-DNA + H(+). Its function is as follows. Involved in base excision repair of DNA damaged by oxidation or by mutagenic agents. Acts as a DNA glycosylase that recognizes and removes damaged bases. Has a preference for oxidized pyrimidines, such as thymine glycol, 5,6-dihydrouracil and 5,6-dihydrothymine. Has AP (apurinic/apyrimidinic) lyase activity and introduces nicks in the DNA strand. Cleaves the DNA backbone by beta-delta elimination to generate a single-strand break at the site of the removed base with both 3'- and 5'-phosphates. This is Endonuclease 8 from Salmonella paratyphi B (strain ATCC BAA-1250 / SPB7).